Here is a 356-residue protein sequence, read N- to C-terminus: Probable scoulerine-9-O-methyltransferase OMT2B (356 aa).

S-adenosyl-L-methionine is bound at residue M173. D176 is a binding site for substrate. S-adenosyl-L-methionine is bound by residues T177, G202, D225, 245–246 (DI), and K259. 260-264 (YVLHN) provides a ligand contact to substrate. H263 serves as the catalytic Proton acceptor.

Belongs to the class I-like SAM-binding methyltransferase superfamily. Cation-independent O-methyltransferase family. COMT subfamily.

The catalysed reaction is (S)-scoulerine + S-adenosyl-L-methionine = (S)-tetrahydrocolumbamine + S-adenosyl-L-homocysteine + H(+). Its pathway is alkaloid biosynthesis. In terms of biological role, methyltransferase involved in the biosynthesis of the benzylisoquinoline alkaloid noscapine. Catalyzes the conversion of (S)-scoulerine to (S)-tetrahydrocolumbamine. The heterodimers OMT2B-SOMT3 and OMT2B-6OMT do not possess 3-O-acetyl-4'-O-demethylpapaveroxine 4'-O-methyltransferase activity. This chain is Probable scoulerine-9-O-methyltransferase OMT2B, found in Papaver somniferum (Opium poppy).